Consider the following 277-residue polypeptide: Indole-3-glycerol phosphate synthase (277 aa).

The protein belongs to the TrpC family.

It catalyses the reaction 1-(2-carboxyphenylamino)-1-deoxy-D-ribulose 5-phosphate + H(+) = (1S,2R)-1-C-(indol-3-yl)glycerol 3-phosphate + CO2 + H2O. It functions in the pathway amino-acid biosynthesis; L-tryptophan biosynthesis; L-tryptophan from chorismate: step 4/5. The polypeptide is Indole-3-glycerol phosphate synthase (Pseudomonas putida (strain W619)).